The chain runs to 380 residues: Erythronate-4-phosphate dehydrogenase (380 aa).

2 residues coordinate substrate: Ser45 and Thr66. Residues 126-127 (QV), Asp146, Thr175, 206-208 (ASR), and Asp232 contribute to the NAD(+) site. The active site involves Arg208. Residue Glu237 is part of the active site. His254 serves as the catalytic Proton donor. Gly257 is a binding site for NAD(+). Substrate is bound at residue Tyr258.

The protein belongs to the D-isomer specific 2-hydroxyacid dehydrogenase family. PdxB subfamily. In terms of assembly, homodimer.

Its subcellular location is the cytoplasm. The enzyme catalyses 4-phospho-D-erythronate + NAD(+) = (R)-3-hydroxy-2-oxo-4-phosphooxybutanoate + NADH + H(+). The protein operates within cofactor biosynthesis; pyridoxine 5'-phosphate biosynthesis; pyridoxine 5'-phosphate from D-erythrose 4-phosphate: step 2/5. Functionally, catalyzes the oxidation of erythronate-4-phosphate to 3-hydroxy-2-oxo-4-phosphonooxybutanoate. The polypeptide is Erythronate-4-phosphate dehydrogenase (Pseudomonas aeruginosa (strain UCBPP-PA14)).